The following is a 124-amino-acid chain: Modulator protein MzrA (124 aa).

Residues 1–7 are Cytoplasmic-facing; the sequence is MINRRMK. Residues 8 to 28 traverse the membrane as a helical segment; it reads TGFVFHLLLLLLPLVVLVTSS. The Periplasmic segment spans residues 29–124; it reads RRTADDVTLH…KLSQQPFKLG (96 aa).

The protein belongs to the MzrA family. Interacts with EnvZ.

It is found in the cell inner membrane. In terms of biological role, modulates the activity of the EnvZ/OmpR two-component regulatory system, probably by directly modulating EnvZ enzymatic activity and increasing stability of phosphorylated OmpR. The chain is Modulator protein MzrA from Musicola paradisiaca (strain Ech703) (Dickeya paradisiaca).